Here is a 230-residue protein sequence, read N- to C-terminus: 2,3-bisphosphoglycerate-dependent phosphoglycerate mutase (230 aa).

Substrate-binding positions include 8–15, 21–22, Arg60, 87–90, Lys98, 114–115, and 183–184; these read RHGESEWN, TG, ERHY, RR, and GN. His9 functions as the Tele-phosphohistidine intermediate in the catalytic mechanism. Glu87 serves as the catalytic Proton donor/acceptor.

The protein belongs to the phosphoglycerate mutase family. BPG-dependent PGAM subfamily.

The catalysed reaction is (2R)-2-phosphoglycerate = (2R)-3-phosphoglycerate. It participates in carbohydrate degradation; glycolysis; pyruvate from D-glyceraldehyde 3-phosphate: step 3/5. Its function is as follows. Catalyzes the interconversion of 2-phosphoglycerate and 3-phosphoglycerate. The polypeptide is 2,3-bisphosphoglycerate-dependent phosphoglycerate mutase (Streptococcus sanguinis (strain SK36)).